A 319-amino-acid chain; its full sequence is Ribosomal RNA small subunit methyltransferase H (319 aa).

S-adenosyl-L-methionine-binding positions include 34 to 36 (GGH), aspartate 54, phenylalanine 83, aspartate 104, and glutamine 111.

It belongs to the methyltransferase superfamily. RsmH family.

The protein localises to the cytoplasm. The enzyme catalyses cytidine(1402) in 16S rRNA + S-adenosyl-L-methionine = N(4)-methylcytidine(1402) in 16S rRNA + S-adenosyl-L-homocysteine + H(+). Specifically methylates the N4 position of cytidine in position 1402 (C1402) of 16S rRNA. The chain is Ribosomal RNA small subunit methyltransferase H from Lactiplantibacillus plantarum (strain ATCC BAA-793 / NCIMB 8826 / WCFS1) (Lactobacillus plantarum).